The primary structure comprises 166 residues: UPF0178 protein BPUM_2255 (166 aa).

It belongs to the UPF0178 family.

The chain is UPF0178 protein BPUM_2255 from Bacillus pumilus (strain SAFR-032).